The following is a 336-amino-acid chain: uncharacterized protein (336 aa).

This sequence to bacterial alkanal monooxygenase alpha and beta chains.

This is an uncharacterized protein from Bacillus subtilis (strain 168).